The sequence spans 95 residues: CRISPR-associated endoribonuclease Cas2 (95 aa).

Aspartate 9 contributes to the Mg(2+) binding site.

The protein belongs to the CRISPR-associated endoribonuclease Cas2 protein family. Homodimer, forms a heterotetramer with a Cas1 homodimer. Requires Mg(2+) as cofactor.

CRISPR (clustered regularly interspaced short palindromic repeat), is an adaptive immune system that provides protection against mobile genetic elements (viruses, transposable elements and conjugative plasmids). CRISPR clusters contain sequences complementary to antecedent mobile elements and target invading nucleic acids. CRISPR clusters are transcribed and processed into CRISPR RNA (crRNA). Functions as a ssRNA-specific endoribonuclease. Involved in the integration of spacer DNA into the CRISPR cassette. The protein is CRISPR-associated endoribonuclease Cas2 of Methylorubrum extorquens (strain CM4 / NCIMB 13688) (Methylobacterium extorquens).